The following is a 757-amino-acid chain: 5-methyltetrahydropteroyltriglutamate--homocysteine methyltransferase (757 aa).

Residues 16–19 (RELK) and Lys-112 each bind 5-methyltetrahydropteroyltri-L-glutamate. L-homocysteine is bound by residues 433–435 (IGS) and Glu-486. L-methionine contacts are provided by residues 433–435 (IGS) and Glu-486. 5-methyltetrahydropteroyltri-L-glutamate contacts are provided by residues 517 to 518 (RC) and Trp-563. Asp-601 provides a ligand contact to L-homocysteine. Asp-601 provides a ligand contact to L-methionine. Glu-607 serves as a coordination point for 5-methyltetrahydropteroyltri-L-glutamate. Positions 643, 645, and 667 each coordinate Zn(2+). His-696 functions as the Proton donor in the catalytic mechanism. Cys-728 serves as a coordination point for Zn(2+).

Belongs to the vitamin-B12 independent methionine synthase family. Zn(2+) serves as cofactor.

It catalyses the reaction 5-methyltetrahydropteroyltri-L-glutamate + L-homocysteine = tetrahydropteroyltri-L-glutamate + L-methionine. Its pathway is amino-acid biosynthesis; L-methionine biosynthesis via de novo pathway; L-methionine from L-homocysteine (MetE route): step 1/1. Its function is as follows. Catalyzes the transfer of a methyl group from 5-methyltetrahydrofolate to homocysteine resulting in methionine formation. The polypeptide is 5-methyltetrahydropteroyltriglutamate--homocysteine methyltransferase (Pasteurella multocida (strain Pm70)).